The following is a 314-amino-acid chain: Type II methyltransferase M.HpaI (314 aa).

This sequence belongs to the N(4)/N(6)-methyltransferase family.

The enzyme catalyses a 2'-deoxyadenosine in DNA + S-adenosyl-L-methionine = an N(6)-methyl-2'-deoxyadenosine in DNA + S-adenosyl-L-homocysteine + H(+). Its function is as follows. A beta subtype methylase that recognizes the double-stranded sequence 5'-GTTAAC-3', methylates A-5 on both strands, and protects the DNA from cleavage by the HpaI endonuclease. The protein is Type II methyltransferase M.HpaI (hpaIM) of Haemophilus parainfluenzae.